The primary structure comprises 159 residues: Superoxide dismutase [Cu-Zn] (159 aa).

3 residues coordinate Cu cation: His47, His49, and His64. The cysteines at positions 58 and 150 are disulfide-linked. 4 residues coordinate Zn(2+): His64, His72, His81, and Asp84. His121 is a binding site for Cu cation.

Belongs to the Cu-Zn superoxide dismutase family. Requires Cu cation as cofactor. Zn(2+) is required as a cofactor.

The protein localises to the cytoplasm. The enzyme catalyses 2 superoxide + 2 H(+) = H2O2 + O2. Destroys radicals which are normally produced within the cells and which are toxic to biological systems. This chain is Superoxide dismutase [Cu-Zn] (SOD), found in Haemonchus contortus (Barber pole worm).